Consider the following 341-residue polypeptide: Serine proteinase inhibitor 2 (341 aa).

It belongs to the serpin family. Poxviruses subfamily.

The protein resides in the host cytoplasm. Its function is as follows. Viral serpin that inhibits both cysteine and serine proteinases involved in the regulation of host inflammatory and apoptosis processes. Major anti-apoptotic protein which inhibits both intrinsic and extrinsic pathways and strongly cleaves host CASP1 and CASP8 but is a rather poor inhibitor of host CASP3. Prevents the proteolytic activity of host interleukin-1-beta converting enzyme (ICE) and ICE-like enzymes. Can also block apoptosis through host tumor necrosis factor (TNF) receptor. The polypeptide is Serine proteinase inhibitor 2 (OPG199) (Bos taurus (Bovine)).